The following is a 172-amino-acid chain: MSAKYTLIFALAALCCLVFSTEAAAQRSRVLSSRRGSELVEKTSDNKEDSELAAQEQDLERQEQEEQNDRLEGRSDDVAEGSDNKEDKETATNNKDTIVKPNKDDARARRIVRAGRRRGGRRGGRRGGRRSARKSVRRGGRRGGRRRGGRRGRGGARRRTSVKRRSGKGNKA.

Residues 1-25 form the signal peptide; sequence MSAKYTLIFALAALCCLVFSTEAAA. A disordered region spans residues 27–172; it reads RSRVLSSRRG…KRRSGKGNKA (146 aa). 3 stretches are compositionally biased toward basic and acidic residues: residues 35–50, 58–90, and 97–108; these read RGSE…KEDS, DLER…DKET, and TIVKPNKDDARA. Residues 45-74 are a coiled coil; it reads DNKEDSELAAQEQDLERQEQEEQNDRLEGR. Residues 109–172 are compositionally biased toward basic residues; the sequence is RRIVRAGRRR…KRRSGKGNKA (64 aa).

As to expression, detected in the brain where it accumulates in the dorsal fan-shaped body following sleep deprivation (at protein level). Expressed in the adult body.

It is found in the secreted. In terms of biological role, antimicrobial protein which is essential for the homeostatic regulation of sleep. Promotes sleep following sleep deprivation or bacterial infection and increases survival following bacterial infection. Likely to promote survival to bacterial infection in two ways; by contributing to the innate immune response and by promoting sleep during sickness to aid recovery. This is Protein nemuri from Drosophila melanogaster (Fruit fly).